The chain runs to 101 residues: Small ribosomal subunit protein bS18c (101 aa).

Over residues 1-19 (MDKSKQLFRKSKGSFRRRL) the composition is skewed to basic residues. Residues 1-23 (MDKSKQLFRKSKGSFRRRLPPIG) form a disordered region.

This sequence belongs to the bacterial ribosomal protein bS18 family. As to quaternary structure, part of the 30S ribosomal subunit.

It localises to the plastid. It is found in the chloroplast. This Acorus gramineus (Dwarf sweet flag) protein is Small ribosomal subunit protein bS18c.